We begin with the raw amino-acid sequence, 195 residues long: dITP/XTP pyrophosphatase (195 aa).

8-13 (TNNQGK) is a substrate binding site. Residues Glu39 and Asp68 each coordinate Mg(2+). Asp68 functions as the Proton acceptor in the catalytic mechanism. Residues Ser69, 149–152 (FGYD), Lys172, and 177–178 (HR) contribute to the substrate site.

Belongs to the HAM1 NTPase family. Homodimer. Mg(2+) is required as a cofactor.

It carries out the reaction XTP + H2O = XMP + diphosphate + H(+). It catalyses the reaction dITP + H2O = dIMP + diphosphate + H(+). The catalysed reaction is ITP + H2O = IMP + diphosphate + H(+). In terms of biological role, pyrophosphatase that catalyzes the hydrolysis of nucleoside triphosphates to their monophosphate derivatives, with a high preference for the non-canonical purine nucleotides XTP (xanthosine triphosphate), dITP (deoxyinosine triphosphate) and ITP. Seems to function as a house-cleaning enzyme that removes non-canonical purine nucleotides from the nucleotide pool, thus preventing their incorporation into DNA/RNA and avoiding chromosomal lesions. This is dITP/XTP pyrophosphatase from Staphylococcus epidermidis (strain ATCC 12228 / FDA PCI 1200).